The following is a 338-amino-acid chain: Large ribosomal subunit protein uL10 (338 aa).

The segment at 298 to 338 (TVQQSQSQQPAAEEKKEEKKEEEKKGPSEEEIASGLASLFG) is disordered. Basic and acidic residues predominate over residues 309–325 (AEEKKEEKKEEEKKGPS).

Belongs to the universal ribosomal protein uL10 family. In terms of assembly, part of the 50S ribosomal subunit. Forms part of the ribosomal stalk which helps the ribosome interact with GTP-bound translation factors. Forms a heptameric L10(L12)2(L12)2(L12)2 complex, where L10 forms an elongated spine to which the L12 dimers bind in a sequential fashion.

Functionally, forms part of the ribosomal stalk, playing a central role in the interaction of the ribosome with GTP-bound translation factors. The protein is Large ribosomal subunit protein uL10 of Saccharolobus solfataricus (strain ATCC 35092 / DSM 1617 / JCM 11322 / P2) (Sulfolobus solfataricus).